Reading from the N-terminus, the 117-residue chain is Aspartate 1-decarboxylase (117 aa).

The Schiff-base intermediate with substrate; via pyruvic acid role is filled by serine 25. Residue serine 25 is modified to Pyruvic acid (Ser). Position 57 (threonine 57) interacts with substrate. Residue tyrosine 58 is the Proton donor of the active site. Substrate is bound at residue 73-75 (GAA).

The protein belongs to the PanD family. As to quaternary structure, heterooctamer of four alpha and four beta subunits. Requires pyruvate as cofactor. In terms of processing, is synthesized initially as an inactive proenzyme, which is activated by self-cleavage at a specific serine bond to produce a beta-subunit with a hydroxyl group at its C-terminus and an alpha-subunit with a pyruvoyl group at its N-terminus.

The protein resides in the cytoplasm. It catalyses the reaction L-aspartate + H(+) = beta-alanine + CO2. The protein operates within cofactor biosynthesis; (R)-pantothenate biosynthesis; beta-alanine from L-aspartate: step 1/1. In terms of biological role, catalyzes the pyruvoyl-dependent decarboxylation of aspartate to produce beta-alanine. This Bacteroides fragilis (strain ATCC 25285 / DSM 2151 / CCUG 4856 / JCM 11019 / LMG 10263 / NCTC 9343 / Onslow / VPI 2553 / EN-2) protein is Aspartate 1-decarboxylase.